Consider the following 493-residue polypeptide: Lysine--tRNA ligase (493 aa).

Mg(2+)-binding residues include glutamate 404 and glutamate 411.

Belongs to the class-II aminoacyl-tRNA synthetase family. As to quaternary structure, homodimer. Mg(2+) serves as cofactor.

It localises to the cytoplasm. The enzyme catalyses tRNA(Lys) + L-lysine + ATP = L-lysyl-tRNA(Lys) + AMP + diphosphate. This chain is Lysine--tRNA ligase, found in Oceanobacillus iheyensis (strain DSM 14371 / CIP 107618 / JCM 11309 / KCTC 3954 / HTE831).